The sequence spans 404 residues: Tryptophan synthase beta chain (404 aa).

Position 91 is an N6-(pyridoxal phosphate)lysine (lysine 91).

The protein belongs to the TrpB family. In terms of assembly, tetramer of two alpha and two beta chains. Pyridoxal 5'-phosphate serves as cofactor.

It catalyses the reaction (1S,2R)-1-C-(indol-3-yl)glycerol 3-phosphate + L-serine = D-glyceraldehyde 3-phosphate + L-tryptophan + H2O. It functions in the pathway amino-acid biosynthesis; L-tryptophan biosynthesis; L-tryptophan from chorismate: step 5/5. In terms of biological role, the beta subunit is responsible for the synthesis of L-tryptophan from indole and L-serine. The polypeptide is Tryptophan synthase beta chain (Clavibacter michiganensis subsp. michiganensis (strain NCPPB 382)).